Here is a 202-residue protein sequence, read N- to C-terminus: Dephospho-CoA kinase (202 aa).

The DPCK domain maps to 4–202 (VIGLTGGIAT…TDKGFINKER (199 aa)). 12 to 17 (ATGKST) lines the ATP pocket.

The protein belongs to the CoaE family.

It localises to the cytoplasm. It carries out the reaction 3'-dephospho-CoA + ATP = ADP + CoA + H(+). It functions in the pathway cofactor biosynthesis; coenzyme A biosynthesis; CoA from (R)-pantothenate: step 5/5. Its function is as follows. Catalyzes the phosphorylation of the 3'-hydroxyl group of dephosphocoenzyme A to form coenzyme A. The chain is Dephospho-CoA kinase from Staphylococcus haemolyticus (strain JCSC1435).